The sequence spans 52 residues: Troponin C, skeletal muscle (52 aa).

EF-hand domains follow at residues 2-37 (KSEE…SGEH) and 38-52 (VTDE…DGDK). The Ca(2+) site is built by Asp-15, Asn-17, Asp-19, Tyr-21, and Glu-26.

Belongs to the troponin C family.

In terms of biological role, troponin is the central regulatory protein of striated muscle contraction. Tn consists of three components: Tn-I which is the inhibitor of actomyosin ATPase, Tn-T which contains the binding site for tropomyosin and Tn-C. The binding of calcium to Tn-C abolishes the inhibitory action of Tn on actin filaments. This chain is Troponin C, skeletal muscle, found in Protopterus dolloi (Slender lungfish).